The primary structure comprises 122 residues: Small ribosomal subunit protein uS13 (122 aa).

The tract at residues 93 to 122 is disordered; it reads RKGLPVRGQTTKNNARTRKGKRKTVGSASK. The segment covering 107–116 has biased composition (basic residues); that stretch reads ARTRKGKRKT.

The protein belongs to the universal ribosomal protein uS13 family. As to quaternary structure, part of the 30S ribosomal subunit. Forms a loose heterodimer with protein S19. Forms two bridges to the 50S subunit in the 70S ribosome.

Its function is as follows. Located at the top of the head of the 30S subunit, it contacts several helices of the 16S rRNA. In the 70S ribosome it contacts the 23S rRNA (bridge B1a) and protein L5 of the 50S subunit (bridge B1b), connecting the 2 subunits; these bridges are implicated in subunit movement. Contacts the tRNAs in the A and P-sites. This is Small ribosomal subunit protein uS13 from Wolinella succinogenes (strain ATCC 29543 / DSM 1740 / CCUG 13145 / JCM 31913 / LMG 7466 / NCTC 11488 / FDC 602W) (Vibrio succinogenes).